A 409-amino-acid chain; its full sequence is Pentatricopeptide repeat-containing protein At1g31790 (409 aa).

PPR repeat units follow at residues 87-121, 122-152, 153-187, 192-226, 229-259, 260-294, 295-330, 331-361, and 363-397; these read NEDIYSCLAKESARENDQRGAHELQVHIMKSSIRP, TITFINRLLLMHVSCGRLDITRQMFDRMPHR, DFHSWAIVFLGCIEMGDYEDAAFLFVSMLKHSQKG, PSWILGCVLKACAMIRDFELGKQVHALCHKLGFID, DSYLSGSLIRFYGEFRCLEDANLVLHQLSNA, NTVAWAAKVTNDYREGEFQEVIRDFIEMGNHGIKK, NVSVFSNVLKACSWVSDGGRSGQQVHANAIKLGFES, DCLIRCRLIEMYGKYGKVKDAEKVFKSSKDE, and SVSCWNAMVASYMQNGIYIEAIKLLYQMKATGIKA.

It belongs to the PPR family. PCMP-A subfamily.

This Arabidopsis thaliana (Mouse-ear cress) protein is Pentatricopeptide repeat-containing protein At1g31790 (PCMP-A1).